The sequence spans 518 residues: Apolipoprotein N-acyltransferase (518 aa).

The next 6 helical transmembrane spans lie at Leu-22–Ile-42, Phe-63–Val-83, Ala-101–Phe-121, Leu-134–Phe-154, Ile-174–Cys-194, and Leu-202–Ile-222. The 251-residue stretch at Val-234 to Leu-484 folds into the CN hydrolase domain. The active-site Proton acceptor is Glu-273. The active site involves Lys-343. Cys-395 functions as the Nucleophile in the catalytic mechanism. A helical membrane pass occupies residues Ala-492–Ile-512.

Belongs to the CN hydrolase family. Apolipoprotein N-acyltransferase subfamily.

It is found in the cell inner membrane. The enzyme catalyses N-terminal S-1,2-diacyl-sn-glyceryl-L-cysteinyl-[lipoprotein] + a glycerophospholipid = N-acyl-S-1,2-diacyl-sn-glyceryl-L-cysteinyl-[lipoprotein] + a 2-acyl-sn-glycero-3-phospholipid + H(+). The protein operates within protein modification; lipoprotein biosynthesis (N-acyl transfer). In terms of biological role, catalyzes the phospholipid dependent N-acylation of the N-terminal cysteine of apolipoprotein, the last step in lipoprotein maturation. In Shewanella oneidensis (strain ATCC 700550 / JCM 31522 / CIP 106686 / LMG 19005 / NCIMB 14063 / MR-1), this protein is Apolipoprotein N-acyltransferase.